Consider the following 331-residue polypeptide: Phenylalanine--tRNA ligase alpha subunit (331 aa).

Glu252 contributes to the Mg(2+) binding site.

Belongs to the class-II aminoacyl-tRNA synthetase family. Phe-tRNA synthetase alpha subunit type 1 subfamily. Tetramer of two alpha and two beta subunits. Mg(2+) serves as cofactor.

The protein resides in the cytoplasm. It carries out the reaction tRNA(Phe) + L-phenylalanine + ATP = L-phenylalanyl-tRNA(Phe) + AMP + diphosphate + H(+). This is Phenylalanine--tRNA ligase alpha subunit from Xanthomonas oryzae pv. oryzae (strain MAFF 311018).